Consider the following 341-residue polypeptide: Ketol-acid reductoisomerase (NADP(+)) (341 aa).

The region spanning 1–182 (MATIYYDKDA…GCTRAGVLET (182 aa)) is the KARI N-terminal Rossmann domain. Residues 25-28 (YGSQ), Ser-51, Ser-53, and 83-86 (DQTQ) each bind NADP(+). The active site involves His-108. Position 134 (Gly-134) interacts with NADP(+). The 146-residue stretch at 183 to 328 (TFKEETETDL…KRLRDMMSWI (146 aa)) folds into the KARI C-terminal knotted domain. Mg(2+) is bound by residues Asp-191, Glu-195, Glu-227, and Glu-231. Position 252 (Ser-252) interacts with substrate.

This sequence belongs to the ketol-acid reductoisomerase family. Requires Mg(2+) as cofactor.

The catalysed reaction is (2R)-2,3-dihydroxy-3-methylbutanoate + NADP(+) = (2S)-2-acetolactate + NADPH + H(+). It carries out the reaction (2R,3R)-2,3-dihydroxy-3-methylpentanoate + NADP(+) = (S)-2-ethyl-2-hydroxy-3-oxobutanoate + NADPH + H(+). It functions in the pathway amino-acid biosynthesis; L-isoleucine biosynthesis; L-isoleucine from 2-oxobutanoate: step 2/4. The protein operates within amino-acid biosynthesis; L-valine biosynthesis; L-valine from pyruvate: step 2/4. Functionally, involved in the biosynthesis of branched-chain amino acids (BCAA). Catalyzes an alkyl-migration followed by a ketol-acid reduction of (S)-2-acetolactate (S2AL) to yield (R)-2,3-dihydroxy-isovalerate. In the isomerase reaction, S2AL is rearranged via a Mg-dependent methyl migration to produce 3-hydroxy-3-methyl-2-ketobutyrate (HMKB). In the reductase reaction, this 2-ketoacid undergoes a metal-dependent reduction by NADPH to yield (R)-2,3-dihydroxy-isovalerate. In Anaeromyxobacter dehalogenans (strain 2CP-C), this protein is Ketol-acid reductoisomerase (NADP(+)).